Reading from the N-terminus, the 87-residue chain is Small ribosomal subunit protein bS20 (87 aa).

The segment at 1 to 20 (MANIKSQIKRNKTNEKARLR) is disordered.

It belongs to the bacterial ribosomal protein bS20 family.

Functionally, binds directly to 16S ribosomal RNA. The polypeptide is Small ribosomal subunit protein bS20 (Corynebacterium efficiens (strain DSM 44549 / YS-314 / AJ 12310 / JCM 11189 / NBRC 100395)).